A 140-amino-acid chain; its full sequence is Large ribosomal subunit protein uL16 (140 aa).

It belongs to the universal ribosomal protein uL16 family. In terms of assembly, part of the 50S ribosomal subunit.

Binds 23S rRNA and is also seen to make contacts with the A and possibly P site tRNAs. This Trichlorobacter lovleyi (strain ATCC BAA-1151 / DSM 17278 / SZ) (Geobacter lovleyi) protein is Large ribosomal subunit protein uL16.